A 494-amino-acid chain; its full sequence is Glutamyl-tRNA(Gln) amidotransferase subunit A (494 aa).

Catalysis depends on charge relay system residues K88 and S163. S187 acts as the Acyl-ester intermediate in catalysis.

The protein belongs to the amidase family. GatA subfamily. As to quaternary structure, heterotrimer of A, B and C subunits.

The enzyme catalyses L-glutamyl-tRNA(Gln) + L-glutamine + ATP + H2O = L-glutaminyl-tRNA(Gln) + L-glutamate + ADP + phosphate + H(+). Functionally, allows the formation of correctly charged Gln-tRNA(Gln) through the transamidation of misacylated Glu-tRNA(Gln) in organisms which lack glutaminyl-tRNA synthetase. The reaction takes place in the presence of glutamine and ATP through an activated gamma-phospho-Glu-tRNA(Gln). This chain is Glutamyl-tRNA(Gln) amidotransferase subunit A, found in Corynebacterium diphtheriae (strain ATCC 700971 / NCTC 13129 / Biotype gravis).